A 152-amino-acid polypeptide reads, in one-letter code: Large ribosomal subunit protein uL30 (152 aa).

This sequence belongs to the universal ribosomal protein uL30 family. Part of the 50S ribosomal subunit.

This chain is Large ribosomal subunit protein uL30, found in Methanosphaera stadtmanae (strain ATCC 43021 / DSM 3091 / JCM 11832 / MCB-3).